Reading from the N-terminus, the 1064-residue chain is Fibropellin-1 (1064 aa).

The signal sequence occupies residues M1–G19. Residues Q20–D55 form the EGF-like 1 domain. 4 disulfide bridges follow: C23–C34, C28–C43, C45–C54, and C62–C88. N-linked (GlcNAc...) asparagine glycosylation occurs at N30. The CUB domain occupies C62 to S175. N136 carries an N-linked (GlcNAc...) asparagine glycan. The 37-residue stretch at D176–E212 folds into the EGF-like 2; calcium-binding domain. Intrachain disulfides connect C180/C191, C185/C200, C202/C211, C218/C229, C223/C238, C240/C249, C256/C267, C261/C276, C278/C287, C294/C305, C299/C314, C316/C325, C332/C343, C337/C352, C354/C363, C370/C381, C375/C390, C392/C401, C408/C419, C413/C428, C430/C439, C446/C457, C451/C466, C468/C477, C484/C495, C489/C504, C506/C515, C522/C533, C527/C542, C544/C553, C560/C571, C565/C580, C582/C591, C598/C609, C603/C618, C620/C629, C636/C647, C641/C656, C658/C667, C674/C685, C679/C694, C696/C705, C712/C723, C717/C732, C734/C743, C750/C761, C755/C770, C772/C781, C788/C799, C793/C808, C810/C819, C826/C837, C831/C846, C848/C857, C864/C875, C869/C884, C886/C895, C902/C913, C907/C922, C924/C933, and C939/C1015. The 37-residue stretch at D214–E250 folds into the EGF-like 3; calcium-binding domain. Positions N252–E288 constitute an EGF-like 4; calcium-binding domain. Positions N290–E326 constitute an EGF-like 5; calcium-binding domain. The region spanning N328 to A364 is the EGF-like 6; calcium-binding domain. The EGF-like 7; calcium-binding domain maps to N366–E402. Positions D404–E440 constitute an EGF-like 8; calcium-binding domain. Residues N442–E478 form the EGF-like 9; calcium-binding domain. The 37-residue stretch at D480 to E516 folds into the EGF-like 10; calcium-binding domain. The EGF-like 11; calcium-binding domain occupies D518 to E554. Residues D556 to E592 form the EGF-like 12; calcium-binding domain. Positions D594–E630 constitute an EGF-like 13; calcium-binding domain. The EGF-like 14; calcium-binding domain occupies N632 to G668. The 37-residue stretch at E670–Q706 folds into the EGF-like 15; calcium-binding domain. The EGF-like 16; calcium-binding domain occupies N708 to E744. The EGF-like 17; calcium-binding domain occupies E746 to E782. One can recognise an EGF-like 18; calcium-binding domain in the interval D784 to E820. The region spanning N822 to E858 is the EGF-like 19; calcium-binding domain. N851 is a glycosylation site (N-linked (GlcNAc...) asparagine). The EGF-like 20 domain occupies S860–E896. One can recognise an EGF-like 21; calcium-binding domain in the interval D898 to E934. The Avidin-like domain maps to G937–Q1056.

In terms of assembly, homotetramer.

It localises to the secreted. The protein resides in the extracellular space. The protein localises to the cytoplasmic vesicle. It is found in the extracellular matrix. Its subcellular location is the hyaline layer. It localises to the apical lamina. Its function is as follows. Forms the apical lamina, a component of the extracellular matrix. This is Fibropellin-1 (EGF1) from Strongylocentrotus purpuratus (Purple sea urchin).